The following is a 462-amino-acid chain: Malonyl-coenzyme:anthocyanin 5-O-glucoside-6'''-O-malonyltransferase (462 aa).

Residues His167 and Asp390 each act as proton acceptor in the active site.

Belongs to the plant acyltransferase family. In terms of tissue distribution, detected in petals and sepals, and at lower levels in bracts and red stems.

It carries out the reaction pelargonidin 3-O-(6-O-[(E)-caffeoyl]-beta-D-glucoside) 5-O-beta-D-glucoside + malonyl-CoA = 4'''-demalonylsalvianin + CoA. Its pathway is pigment biosynthesis; anthocyanin biosynthesis. Its activity is regulated as follows. Completely inhibited by 10 mM p-coumaric acid, this inhibition is rapid, reversible and non-competitive. Completely inhibited by 0.1 mM Cu(2+), 0.1 mM Hg(2+) and 10 mM caffeic acid. Partially inhibited by 5 mM N-ethylmaleimide, 1 mM diethylpyrocarbonate and 1 mM acetyl-CoA. Functionally, catalyzes the transfer of a malonyl group from malonyl-CoA to the 6'''-hydroxyl group of the 5-glucosyl moiety of anthocyanins. Active towards bisdemalonylsalvianin (pelargonidin 3-O-(6-caffeoyl-beta-D-glucoside) 5-O-beta-D-glucoside) and shisonin, but not towards nodemalonylsalvianin, salvianin, pelargonidin 3,5-diglucoside and delphinidin 3,5-diglucoside. The protein is Malonyl-coenzyme:anthocyanin 5-O-glucoside-6'''-O-malonyltransferase of Salvia splendens (Scarlet sage).